The sequence spans 300 residues: Sodium/potassium/calcium exchanger 1 (300 aa).

The segment at 1-251 is disordered; it reads DPGSQGVGAE…ENEQPLSLEW (251 aa). Composition is skewed to acidic residues over residues 92 to 102, 109 to 119, 126 to 136, 158 to 175, and 215 to 244; these read GEVEGDEDEGE, GEVE…DEGE, and GDSE…EENE. A helical membrane pass occupies residues 259–275; it reads AIYLFLLPIVFPLWLTV.

Belongs to the Ca(2+):cation antiporter (CaCA) (TC 2.A.19) family. SLC24A subfamily. The uncleaved signal sequence is required for efficient membrane targeting and proper membrane integration and topology.

The protein localises to the cell membrane. It catalyses the reaction Ca(2+)(out) + K(+)(out) + 4 Na(+)(in) = Ca(2+)(in) + K(+)(in) + 4 Na(+)(out). Its function is as follows. Calcium, potassium:sodium antiporter that transports 1 Ca(2+) and 1 K(+) in exchange for 4 Na(+). Critical component of the visual transduction cascade, controlling the calcium concentration of outer segments during light and darkness. Light causes a rapid lowering of cytosolic free calcium in the outer segment of both retinal rod and cone photoreceptors and the light-induced lowering of calcium is caused by extrusion via this protein which plays a key role in the process of light adaptation. This chain is Sodium/potassium/calcium exchanger 1 (SLC24A1), found in Bison bison (American bison).